Here is a 359-residue protein sequence, read N- to C-terminus: Phosphoserine aminotransferase (359 aa).

Position 41 (Arg41) interacts with L-glutamate. Positions 101, 151, 170, and 193 each coordinate pyridoxal 5'-phosphate. N6-(pyridoxal phosphate)lysine is present on Lys194. 235–236 (NT) lines the pyridoxal 5'-phosphate pocket.

This sequence belongs to the class-V pyridoxal-phosphate-dependent aminotransferase family. SerC subfamily. As to quaternary structure, homodimer. Requires pyridoxal 5'-phosphate as cofactor.

It is found in the cytoplasm. The enzyme catalyses O-phospho-L-serine + 2-oxoglutarate = 3-phosphooxypyruvate + L-glutamate. It carries out the reaction 4-(phosphooxy)-L-threonine + 2-oxoglutarate = (R)-3-hydroxy-2-oxo-4-phosphooxybutanoate + L-glutamate. It functions in the pathway amino-acid biosynthesis; L-serine biosynthesis; L-serine from 3-phospho-D-glycerate: step 2/3. It participates in cofactor biosynthesis; pyridoxine 5'-phosphate biosynthesis; pyridoxine 5'-phosphate from D-erythrose 4-phosphate: step 3/5. Its function is as follows. Catalyzes the reversible conversion of 3-phosphohydroxypyruvate to phosphoserine and of 3-hydroxy-2-oxo-4-phosphonooxybutanoate to phosphohydroxythreonine. This chain is Phosphoserine aminotransferase, found in Laribacter hongkongensis (strain HLHK9).